We begin with the raw amino-acid sequence, 161 residues long: Endoribonuclease YbeY (161 aa).

Residues His-120, His-124, and Asp-130 each contribute to the Zn(2+) site.

Belongs to the endoribonuclease YbeY family. It depends on Zn(2+) as a cofactor.

Its subcellular location is the cytoplasm. Single strand-specific metallo-endoribonuclease involved in late-stage 70S ribosome quality control and in maturation of the 3' terminus of the 16S rRNA. The sequence is that of Endoribonuclease YbeY from Chlamydia trachomatis serovar L2 (strain ATCC VR-902B / DSM 19102 / 434/Bu).